Reading from the N-terminus, the 944-residue chain is MAAIAAVAARRRRSWLSLVLAYLGVCLGITLAVDRSNFKTCDESSFCKRQRSIRPGLSPYRALLDTLQLGPDALTVHLIHEVTKVLLVLELQGLQKNMTRIRIDELEPRRPRYRVPDVLVADPPTARLSVSGRDDNSVELTVAEGPYKIILTAQPFRLDLLEDRSLLLSVNARGLMAFEHQRAPRVPQESKDPAEGNGAQPEATPGDGDKPEETQEKAEKDEPGAWEETFKTHSDSKPYGPTSVGLDFSLPGMEHVYGIPEHADSLRLKVTEGGEPYRLYNLDVFQYELNNPMALYGSVPVLLAHSFHRDLGIFWLNAAETWVDISSNTAGKTLFGKMLDYLQGSGETPQTDIRWMSESGIIDVFLMLGPSVFDVFRQYASLTGTQALPPLFSLGYHQSRWNYRDEADVLEVDQGFDDHNMPCDVIWLDIEHADGKRYFTWDPTRFPQPLNMLEHLASKRRKLVAIVDPHIKVDSGYRVHEELRNHGLYVKTRDGSDYEGWCWPGSASYPDFTNPRMRAWWSNMFSFDNYEGSAPNLYVWNDMNEPSVFNGPEVTMLKDAVHYGGWEHRDIHNIYGLYVHMATADGLIQRSGGIERPFVLSRAFFSGSQRFGAVWTGDNTAEWDHLKISIPMCLSLALVGLSFCGADVGGFFKNPEPELLVRWYQMGAYQPFFRAHAHLDTGRREPWLLASQYQDAIRDALFQRYSLLPFWYTLFYQAHKEGFPVMRPLWVQYPEDMSTFSIEDQFMLGDALLIHPVSDAGAHGVQVYLPGQEEVWYDIQSYQKHHGPQTLYLPVTLSSIPVFQRGGTIVPRWMRVRRSSDCMKDDPITLFVALSPQGTAQGELFLDDGHTFNYQTRHEFLLRRFSFSGSTLVSSSADPKGHLETPIWIERVVIMGAGKPAAVVLQTKGSPESRLSFQHDPETSVLILRKPGVSVASDWSIHLR.

Residues 1–32 form the signal peptide; that stretch reads MAAIAAVAARRRRSWLSLVLAYLGVCLGITLA. Cys-41 and Cys-47 are disulfide-bonded. At Ser-52 the chain carries Phosphoserine. An N-linked (GlcNAc...) asparagine glycan is attached at Asn-97. The tract at residues 180–238 is disordered; sequence HQRAPRVPQESKDPAEGNGAQPEATPGDGDKPEETQEKAEKDEPGAWEETFKTHSDSKP. The span at 207–236 shows a compositional bias: basic and acidic residues; it reads DGDKPEETQEKAEKDEPGAWEETFKTHSDS. Positions 283 and 429 each coordinate substrate. The Nucleophile role is filled by Asp-542. Substrate is bound at residue Arg-602. Asp-618 acts as the Proton donor in catalysis. An intrachain disulfide couples Cys-633 to Cys-644. His-676 lines the substrate pocket.

It belongs to the glycosyl hydrolase 31 family. Heterodimer of a catalytic alpha subunit (GANAB) and a beta subunit (PRKCSH). Binds glycosylated PTPRC.

The protein localises to the endoplasmic reticulum. It localises to the golgi apparatus. It is found in the melanosome. It carries out the reaction N(4)-(alpha-D-Glc-(1-&gt;3)-alpha-D-Man-(1-&gt;2)-alpha-D-Man-(1-&gt;2)-alpha-D-Man-(1-&gt;3)-[alpha-D-Man-(1-&gt;2)-alpha-D-Man-(1-&gt;3)-[alpha-D-Man-(1-&gt;2)-alpha-D-Man-(1-&gt;6)]-alpha-D-Man-(1-&gt;6)]-beta-D-Man-(1-&gt;4)-beta-D-GlcNAc-(1-&gt;4)-beta-D-GlcNAc)-L-asparaginyl-[protein] + H2O = N(4)-(alpha-D-Man-(1-&gt;2)-alpha-D-Man-(1-&gt;2)-alpha-D-Man-(1-&gt;3)-[alpha-D-Man-(1-&gt;2)-alpha-D-Man-(1-&gt;3)-[alpha-D-Man-(1-&gt;2)-alpha-D-Man-(1-&gt;6)]-alpha-D-Man-(1-&gt;6)]-beta-D-Man-(1-&gt;4)-beta-D-GlcNAc-(1-&gt;4)-beta-D-GlcNAc)-L-asparaginyl-[protein] (N-glucan mannose isomer 9A1,2,3B1,2,3) + beta-D-glucose. The catalysed reaction is N(4)-(alpha-D-Glc-(1-&gt;3)-alpha-D-Glc-(1-&gt;3)-alpha-D-Man-(1-&gt;2)-alpha-D-Man-(1-&gt;2)-alpha-D-Man-(1-&gt;3)-[alpha-D-Man-(1-&gt;2)-alpha-D-Man-(1-&gt;3)-[alpha-D-Man-(1-&gt;2)-alpha-D-Man-(1-&gt;6)]-alpha-D-Man-(1-&gt;6)]-beta-D-Man-(1-&gt;4)-beta-D-GlcNAc-(1-&gt;4)-beta-D-GlcNAc)-L-asparaginyl-[protein] + H2O = N(4)-(alpha-D-Glc-(1-&gt;3)-alpha-D-Man-(1-&gt;2)-alpha-D-Man-(1-&gt;2)-alpha-D-Man-(1-&gt;3)-[alpha-D-Man-(1-&gt;2)-alpha-D-Man-(1-&gt;3)-[alpha-D-Man-(1-&gt;2)-alpha-D-Man-(1-&gt;6)]-alpha-D-Man-(1-&gt;6)]-beta-D-Man-(1-&gt;4)-beta-D-GlcNAc-(1-&gt;4)-beta-D-GlcNAc)-L-asparaginyl-[protein] + beta-D-glucose. Its pathway is glycan metabolism; N-glycan metabolism. Functionally, catalytic subunit of glucosidase II that cleaves sequentially the 2 innermost alpha-1,3-linked glucose residues from the Glc(2)Man(9)GlcNAc(2) oligosaccharide precursor of immature glycoproteins. Required for PKD1/Polycystin-1 and PKD2/Polycystin-2 maturation and localization to the cell surface and cilia. This is Neutral alpha-glucosidase AB from Mus musculus (Mouse).